Consider the following 490-residue polypeptide: Probable cytosol aminopeptidase (490 aa).

Mn(2+)-binding residues include Lys262 and Asp267. Lys274 is an active-site residue. Residues Asp285, Asp344, and Glu346 each coordinate Mn(2+). Arg348 is a catalytic residue.

Belongs to the peptidase M17 family. Mn(2+) is required as a cofactor.

The protein localises to the cytoplasm. The enzyme catalyses Release of an N-terminal amino acid, Xaa-|-Yaa-, in which Xaa is preferably Leu, but may be other amino acids including Pro although not Arg or Lys, and Yaa may be Pro. Amino acid amides and methyl esters are also readily hydrolyzed, but rates on arylamides are exceedingly low.. It carries out the reaction Release of an N-terminal amino acid, preferentially leucine, but not glutamic or aspartic acids.. Functionally, presumably involved in the processing and regular turnover of intracellular proteins. Catalyzes the removal of unsubstituted N-terminal amino acids from various peptides. This is Probable cytosol aminopeptidase from Mannheimia succiniciproducens (strain KCTC 0769BP / MBEL55E).